Reading from the N-terminus, the 381-residue chain is Tafazzin (381 aa).

Residues 1 to 25 (MSFRDVLERGDEFLEAYPRRSPLWR) are Mitochondrial intermembrane-facing. Residues 26–47 (FLSYSTSLLTFGVSKLLLFTCY) lie within the membrane without spanning it. Topologically, residues 48-381 (NVKLNGFEKL…PEGKPKGKDD (334 aa)) are mitochondrial intermembrane. Positions 77–82 (HMSMVD) match the HXXXXD motif motif. A required for membrane insertion region spans residues 215 to 232 (LEATKPPIVVPIFATGFE).

This sequence belongs to the taffazin family.

The protein resides in the mitochondrion outer membrane. Its subcellular location is the mitochondrion inner membrane. The catalysed reaction is 1'-[1,2-diacyl-sn-glycero-3-phospho],3'-[1-acyl-sn-glycero-3-phospho]-glycerol + a 1,2-diacyl-sn-glycero-3-phosphocholine = a cardiolipin + a 1-acyl-sn-glycero-3-phosphocholine. It catalyses the reaction 1,2-di-(9Z,12Z-octadecadienoyl)-sn-glycero-3-phosphocholine + 1'-[1,2-di-(9Z,12Z-octadecadienoyl)-sn-glycero-3-phospho]-3'-[1-(9Z,12Z-octadecadienoyl)-sn-glycero-3-phospho]-glycerol = 1-(9Z,12Z)-octadecadienoyl-sn-glycero-3-phosphocholine + 1',3'-bis-[1,2-di-(9Z,12Z-octadecadienoyl)-sn-glycero-3-phospho]-glycerol. It carries out the reaction 1'-[1,2-di-(9Z-octadecenoyl)-sn-glycero-3-phospho]-3'-[1-(9Z-octadecenoyl)-2-hexadecanoyl-sn-glycero-3-phospho]-glycerol + 1-hexadecanoyl-sn-glycero-3-phosphocholine = 1'-[1,2-di-(9Z-octadecenoyl)-sn-glycero-3-phospho]-3'-[1-(9Z-octadecenoyl)-sn-glycero-3-phospho]-glycerol + 1,2-dihexadecanoyl-sn-glycero-3-phosphocholine. The enzyme catalyses 1'-[1,2-di-(9Z-octadecenoyl)-sn-glycero-3-phospho]-3'-[1-(9Z-octadecenoyl)-2-(9Z-hexadecenoyl)-sn-glycero-3-phospho]-glycerol + 1-(9Z-hexadecenoyl)-sn-glycero-3-phosphocholine = 1,2-di-(9Z-hexadecenoyl)-sn-glycero-3-phosphocholine + 1'-[1,2-di-(9Z-octadecenoyl)-sn-glycero-3-phospho]-3'-[1-(9Z-octadecenoyl)-sn-glycero-3-phospho]-glycerol. The catalysed reaction is 1',3'-bis[1,2-di-(9Z-octadecenoyl)-sn-glycero-3-phospho]-glycerol + 1-(9Z-octadecenoyl)-sn-glycero-3-phosphocholine = 1'-[1,2-di-(9Z-octadecenoyl)-sn-glycero-3-phospho]-3'-[1-(9Z-octadecenoyl)-sn-glycero-3-phospho]-glycerol + 1,2-di-(9Z-octadecenoyl)-sn-glycero-3-phosphocholine. It catalyses the reaction 1'-[1,2-di-(9Z-octadecenoyl)-sn-glycero-3-phospho]-3'-[1-(9Z-octadecenoyl)-2-(9Z,12Z-octadecadienoyl)-sn-glycero-3-phospho]-glycerol + 1-(9Z,12Z)-octadecadienoyl-sn-glycero-3-phosphocholine = 1,2-di-(9Z,12Z-octadecadienoyl)-sn-glycero-3-phosphocholine + 1'-[1,2-di-(9Z-octadecenoyl)-sn-glycero-3-phospho]-3'-[1-(9Z-octadecenoyl)-sn-glycero-3-phospho]-glycerol. It carries out the reaction 1'-[1,2-di-(9Z-octadecenoyl)-sn-glycero-3-phospho]-3'-[1-(9Z-octadecenoyl)-2-(9Z-hexadecenoyl)-sn-glycero-3-phospho]-glycerol + 1-hexadecanoyl-sn-glycero-3-phosphocholine = 1-hexadecanoyl-2-(9Z-hexadecenoyl)-sn-glycero-3-phosphocholine + 1'-[1,2-di-(9Z-octadecenoyl)-sn-glycero-3-phospho]-3'-[1-(9Z-octadecenoyl)-sn-glycero-3-phospho]-glycerol. The enzyme catalyses 1'-[1,2-di-(9Z-octadecenoyl)-sn-glycero-3-phospho]-3'-[1-(9Z-octadecenoyl)-2-hexadecanoyl-sn-glycero-3-phospho]-glycerol + 1-(9Z-hexadecenoyl)-sn-glycero-3-phosphocholine = 1-(9Z-hexadecenoyl)-2-hexadecanoyl-sn-glycero-3-phosphocholine + 1'-[1,2-di-(9Z-octadecenoyl)-sn-glycero-3-phospho]-3'-[1-(9Z-octadecenoyl)-sn-glycero-3-phospho]-glycerol. The catalysed reaction is 2 1'-[1,2-diacyl-sn-glycero-3-phospho],3'-[1-acyl-sn-glycero-3-phospho]-glycerol = 1',3'-bis-[1-acyl-sn-glycero-3-phospho]-glycerol + a cardiolipin. It catalyses the reaction 2 1'-[1,2-di-(9Z-octadecenoyl)-sn-glycero-3-phospho]-3'-[1-(9Z-octadecenoyl)-sn-glycero-3-phospho]-glycerol = 1',3'-bis-[1-(9Z-octadecenoyl)-sn-glycero-3-phospho]-glycerol + 1',3'-bis[1,2-di-(9Z-octadecenoyl)-sn-glycero-3-phospho]-glycerol. It carries out the reaction 1,2-di-(9Z-hexadecenoyl)-sn-glycero-3-phosphocholine + 1-hexadecanoyl-sn-glycero-3-phosphocholine = 1-hexadecanoyl-2-(9Z-hexadecenoyl)-sn-glycero-3-phosphocholine + 1-(9Z-hexadecenoyl)-sn-glycero-3-phosphocholine. The enzyme catalyses 1'-[1,2-di-(9Z,12Z-octadecadienoyl)-sn-glycero-3-phospho]-3'-[1-(9Z,12Z-octadecadienoyl)-sn-glycero-3-phospho]-glycerol + 1,2-di-(9Z-octadecenoyl)-sn-glycero-3-phosphocholine = 1'-[1,2-di-(9Z,12Z-octadecadienoyl)-sn-glycero-3-phospho]-3'-[1-(9Z,12Z-octadecadienoyl)-2-(9Z-octadecenoyl)-sn-glycero-3-phospho]-glycerol + 1-(9Z-octadecenoyl)-sn-glycero-3-phosphocholine. It participates in phospholipid metabolism. In terms of biological role, acyltransferase required to remodel newly synthesized phospholipid cardiolipin (1',3'-bis-[1,2-diacyl-sn-glycero-3-phospho]-glycerol or CL), a key component of the mitochondrial inner membrane, with tissue specific acyl chains necessary for adequate mitochondrial function. Its role in cellular physiology is to improve mitochondrial performance. CL is critical for the coassembly of lipids and proteins in mitochondrial membranes, for instance, remodeling of the acyl groups of CL in the mitochondrial inner membrane affects the assembly and stability of respiratory chain complex IV and its supercomplex forms. Catalyzes the transacylation between phospholipids and lysophospholipids, with the highest rate being between phosphatidylcholine (1,2-diacyl-sn-glycero-3-phosphocholine or PC) and CL. Catalyzes both 1-acyl-sn-glycero-3-phosphocholine (lysophosphatidylcholine or LPC) reacylation and PC-CL transacylation, that means, it exchanges acyl groups between CL and PC by a combination of forward and reverse transacylations. Also catalyzes transacylations between other phospholipids such as phosphatidylethanolamine (1,2-diacyl-sn-glycero-3-phosphoethanolamine or PE) and CL, between PC and PE, and between PC and phosphatidate (1,2-diacyl-sn-glycero-3-phosphate or PA), although at lower rate. Not regiospecific, it transfers acyl groups into any of the sn-1 and sn-2 positions of the monolysocardiolipin (MLCL), which is an important prerequisite for uniformity and symmetry in CL acyl distribution. Cannot transacylate dilysocardiolipin (DLCL), thus, the role of MLCL is limited to that of an acyl acceptor. CoA-independent, it can reshuffle molecular species within a single phospholipid class. Redistributes fatty acids between MLCL, CL, and other lipids, which prolongs the half-life of CL. Its action is completely reversible, which allows for cyclic changes, such as fission and fusion or bending and flattening of the membrane. Hence, by contributing to the flexibility of the lipid composition, it plays an important role in the dynamics of mitochondria membranes. Essential for the final stage of spermatogenesis, spermatid individualization. Required for the initiation of mitophagy. The polypeptide is Tafazzin (TAZ1) (Saccharomyces cerevisiae (strain ATCC 204508 / S288c) (Baker's yeast)).